Consider the following 506-residue polypeptide: NAD(P)H-quinone oxidoreductase subunit 2 (506 aa).

13 helical membrane passes run 14-34 (AIIP…VDLA), 42-62 (WAPI…ALQW), 79-99 (LAIS…LISW), 108-128 (PIGE…LLCG), 132-152 (LISV…LSGY), 167-187 (LLVG…LYGL), 206-226 (FITS…IAAV), 240-260 (PTPV…AFAI), 276-296 (LLFT…ALAQ), 302-322 (MLAY…VSGT), 330-350 (VLYL…VILF), 374-394 (LGLS…GFFG), and 409-429 (LLVI…ISVI).

Belongs to the complex I subunit 2 family. As to quaternary structure, NDH-1 can be composed of about 15 different subunits; different subcomplexes with different compositions have been identified which probably have different functions.

The protein localises to the cellular thylakoid membrane. The enzyme catalyses a plastoquinone + NADH + (n+1) H(+)(in) = a plastoquinol + NAD(+) + n H(+)(out). The catalysed reaction is a plastoquinone + NADPH + (n+1) H(+)(in) = a plastoquinol + NADP(+) + n H(+)(out). NDH-1 shuttles electrons from an unknown electron donor, via FMN and iron-sulfur (Fe-S) centers, to quinones in the respiratory and/or the photosynthetic chain. The immediate electron acceptor for the enzyme in this species is believed to be plastoquinone. Couples the redox reaction to proton translocation, and thus conserves the redox energy in a proton gradient. Cyanobacterial NDH-1 also plays a role in inorganic carbon-concentration. The protein is NAD(P)H-quinone oxidoreductase subunit 2 of Prochlorococcus marinus (strain MIT 9215).